The following is a 519-amino-acid chain: MSDYWTTMASLLGMLAFCQTIVQLVFPPELRLAFLHFLTRIRHVFSSHIYFDITEIDGVNTNELYNAVQLYLSSSVTVNDAVSSSNNNTRLSLTRVPNSSSVTFGLSNNDRITDVFNGVTILWEHVVVQRQVQSFSWRPMPEEKRGFTLQINKRDKALVLDSYLDYIVGKSEEIRRRNEERLLYTNSRGVSLDARSHPWDSVRFKHPSTFDTLAMDPEKKKRIMEDLREFANGQGFYQKTGRAWKRGYLLYGPPGTGKSSLIAAMANYLGYDIYDLELTEVQNNSELRKLLMKTSSKSIIVIEDIDCSISLTKRGKNKKKNGSYEYDPGLTNGSGLEEPGSSVTLSGLLNFTDGLWSCCGSEKIFVFTTNHIEKLDSALMRSGRMDMHVHMGFCKFPALKILLKNYLRLEEEDMDSVVLKEMEECVEEAEITPADVSEVLIRNRSDAEKAVREIVSVLKERVVKRRKSVGLKKKKQEGQEEEEEAEEEQEKRALDSPNRRNREVCGFREEEEEEDEKEK.

Positions 1–24 (MSDYWTTMASLLGMLAFCQTIVQL) are cleaved as a signal peptide. 252–259 (GPPGTGKS) provides a ligand contact to ATP. Disordered stretches follow at residues 315 to 335 (GKNK…NGSG) and 467 to 519 (KSVG…EKEK). Acidic residues predominate over residues 479 to 488 (QEEEEEAEEE). Positions 489–508 (QEKRALDSPNRRNREVCGFR) are enriched in basic and acidic residues. Over residues 509 to 519 (EEEEEEDEKEK) the composition is skewed to acidic residues.

It belongs to the AAA ATPase family. BCS1 subfamily. The cofactor is Mg(2+).

It catalyses the reaction ATP + H2O = ADP + phosphate + H(+). The polypeptide is AAA-ATPase At4g30250 (Arabidopsis thaliana (Mouse-ear cress)).